Here is a 556-residue protein sequence, read N- to C-terminus: CDP-diacylglycerol--glycerol-3-phosphate 3-phosphatidyltransferase, mitochondrial (556 aa).

The N-terminal 28 residues, 1-28 (MAAAAAAAAGPVFWRRLLGLLPGRPGLA), are a transit peptide targeting the mitochondrion. Phosphoserine is present on serine 49. 124-131 (ASLYLGIG) is a binding site for ATP. PLD phosphodiesterase domains lie at 215-241 (TIGL…SDSY) and 419-457 (FGAK…LQEY). Residues histidine 220, lysine 222, and aspartate 227 contribute to the active site.

It belongs to the CDP-alcohol phosphatidyltransferase class-II family.

Its subcellular location is the mitochondrion. The enzyme catalyses a CDP-1,2-diacyl-sn-glycerol + sn-glycerol 3-phosphate = a 1,2-diacyl-sn-glycero-3-phospho-(1'-sn-glycero-3'-phosphate) + CMP + H(+). It participates in phospholipid metabolism; phosphatidylglycerol biosynthesis; phosphatidylglycerol from CDP-diacylglycerol: step 1/2. Its activity is regulated as follows. Activated by calcium and magnesium and inhibited by other bivalent cations. Its function is as follows. Functions in the biosynthesis of the anionic phospholipids phosphatidylglycerol and cardiolipin. The sequence is that of CDP-diacylglycerol--glycerol-3-phosphate 3-phosphatidyltransferase, mitochondrial (PGS1) from Bos taurus (Bovine).